Here is a 473-residue protein sequence, read N- to C-terminus: Cholesterol 22-monohydroxylase CYP90B52 (473 aa).

Residues 2–22 traverse the membrane as a helical segment; that stretch reads EGLLLLLPTAIIALYLYISLI. A heme-binding site is contributed by cysteine 422.

This sequence belongs to the cytochrome P450 family. Mainly expressed in leaves and roots and, at low levels, in fruits and stems.

Its subcellular location is the membrane. It catalyses the reaction cholesterol + reduced [NADPH--hemoprotein reductase] + O2 = (22S)-22-hydroxycholesterol + oxidized [NADPH--hemoprotein reductase] + H2O + H(+). It participates in steroid metabolism; cholesterol metabolism. Its function is as follows. Canonical brassinosteroid (BR)-biosynthetic enzyme capable of converting cholesterol to 22S-hydroxycholesterol via sterol-C22 hydroxylation. The sequence is that of Cholesterol 22-monohydroxylase CYP90B52 from Paris polyphylla (Daiswa polyphylla).